We begin with the raw amino-acid sequence, 413 residues long: Tryptophan synthase beta chain (413 aa).

Lysine 106 bears the N6-(pyridoxal phosphate)lysine mark.

The protein belongs to the TrpB family. Tetramer of two alpha and two beta chains. It depends on pyridoxal 5'-phosphate as a cofactor.

It carries out the reaction (1S,2R)-1-C-(indol-3-yl)glycerol 3-phosphate + L-serine = D-glyceraldehyde 3-phosphate + L-tryptophan + H2O. Its pathway is amino-acid biosynthesis; L-tryptophan biosynthesis; L-tryptophan from chorismate: step 5/5. Its function is as follows. The beta subunit is responsible for the synthesis of L-tryptophan from indole and L-serine. This is Tryptophan synthase beta chain from Methylorubrum populi (strain ATCC BAA-705 / NCIMB 13946 / BJ001) (Methylobacterium populi).